Reading from the N-terminus, the 284-residue chain is Sulfotransferase 4A1 (284 aa).

A phosphothreonine mark is found at threonine 8, threonine 11, and threonine 205.

This sequence belongs to the sulfotransferase 1 family. As to expression, highly expressed in the cerebral cortex and frontal lobe, slightly less in the cerebellum, occipital and temporal lobes, relatively low in the medulla and putamen, and lowest in the spinal cord. No expression detected in the pancreas. Highly expressed in fetal brain and occipital lobe, slightly less in the whole brain, frontal lobe, hippocampus, and lung, very low expression in cerebellum, medulla oblongata, temporal lobe, testis, kidney and appendix.

Its subcellular location is the cytoplasm. Its function is as follows. Atypical sulfotransferase family member with very low affinity for 3'-phospho-5'-adenylyl sulfate (PAPS) and very low catalytic activity towards L-triiodothyronine, thyroxine, estrone, p-nitrophenol, 2-naphthylamine, and 2-beta-naphthol. May have a role in the metabolism of drugs and neurotransmitters in the CNS. This chain is Sulfotransferase 4A1 (SULT4A1), found in Homo sapiens (Human).